The primary structure comprises 82 residues: RNA-binding protein Hfq (82 aa).

Positions 11-71 (DTFLNHVRKT…ISTIMPGAPI (61 aa)) constitute a Sm domain.

Belongs to the Hfq family. In terms of assembly, homohexamer.

RNA chaperone that binds small regulatory RNA (sRNAs) and mRNAs to facilitate mRNA translational regulation in response to envelope stress, environmental stress and changes in metabolite concentrations. Also binds with high specificity to tRNAs. The chain is RNA-binding protein Hfq from Bradyrhizobium sp. (strain BTAi1 / ATCC BAA-1182).